A 431-amino-acid polypeptide reads, in one-letter code: Adenylosuccinate synthetase (431 aa).

GTP is bound by residues 13–19 and 41–43; these read GDEGKGK and GHT. The active-site Proton acceptor is the Asp14. Mg(2+)-binding residues include Asp14 and Gly41. IMP is bound by residues 14 to 17, 39 to 42, Thr130, Arg144, Gln225, Thr240, and Arg304; these read DEGK and NAGH. The Proton donor role is filled by His42. 300 to 306 lines the substrate pocket; it reads ATTGRKR. GTP contacts are provided by residues Arg306, 332–334, and 415–417; these read KLD and STG.

Belongs to the adenylosuccinate synthetase family. Homodimer. Mg(2+) serves as cofactor.

It is found in the cytoplasm. It catalyses the reaction IMP + L-aspartate + GTP = N(6)-(1,2-dicarboxyethyl)-AMP + GDP + phosphate + 2 H(+). Its pathway is purine metabolism; AMP biosynthesis via de novo pathway; AMP from IMP: step 1/2. Plays an important role in the de novo pathway of purine nucleotide biosynthesis. Catalyzes the first committed step in the biosynthesis of AMP from IMP. In Shewanella amazonensis (strain ATCC BAA-1098 / SB2B), this protein is Adenylosuccinate synthetase.